The primary structure comprises 257 residues: Imidazole glycerol phosphate synthase subunit HisF (257 aa).

Catalysis depends on residues aspartate 12 and aspartate 131.

It belongs to the HisA/HisF family. As to quaternary structure, heterodimer of HisH and HisF.

It localises to the cytoplasm. The catalysed reaction is 5-[(5-phospho-1-deoxy-D-ribulos-1-ylimino)methylamino]-1-(5-phospho-beta-D-ribosyl)imidazole-4-carboxamide + L-glutamine = D-erythro-1-(imidazol-4-yl)glycerol 3-phosphate + 5-amino-1-(5-phospho-beta-D-ribosyl)imidazole-4-carboxamide + L-glutamate + H(+). It participates in amino-acid biosynthesis; L-histidine biosynthesis; L-histidine from 5-phospho-alpha-D-ribose 1-diphosphate: step 5/9. In terms of biological role, IGPS catalyzes the conversion of PRFAR and glutamine to IGP, AICAR and glutamate. The HisF subunit catalyzes the cyclization activity that produces IGP and AICAR from PRFAR using the ammonia provided by the HisH subunit. This chain is Imidazole glycerol phosphate synthase subunit HisF, found in Teredinibacter turnerae (strain ATCC 39867 / T7901).